The primary structure comprises 95 residues: Cobalt transport protein CbiN (95 aa).

2 consecutive transmembrane segments (helical) span residues 7 to 27 (IMLI…SGLG) and 67 to 87 (LLFA…FGYY).

It belongs to the CbiN family. As to quaternary structure, forms an energy-coupling factor (ECF) transporter complex composed of an ATP-binding protein (A component, CbiO), a transmembrane protein (T component, CbiQ) and 2 possible substrate-capture proteins (S components, CbiM and CbiN) of unknown stoichimetry.

The protein localises to the cell membrane. Its pathway is cofactor biosynthesis; adenosylcobalamin biosynthesis. Its function is as follows. Part of the energy-coupling factor (ECF) transporter complex CbiMNOQ involved in cobalt import. The sequence is that of Cobalt transport protein CbiN from Methanothermobacter marburgensis (strain ATCC BAA-927 / DSM 2133 / JCM 14651 / NBRC 100331 / OCM 82 / Marburg) (Methanobacterium thermoautotrophicum).